Consider the following 430-residue polypeptide: UDP-glucuronate 4-epimerase 3 (430 aa).

A run of 2 helical transmembrane segments spans residues 29-49 (SVAK…IFFY) and 90-110 (GFSV…SAAL). Position 92–123 (92–123 (SVLVTGAAGFVGTHVSAALKRRGDGVLGLDNF)) interacts with NAD(+). Catalysis depends on Tyr242, which acts as the Proton acceptor.

Belongs to the NAD(P)-dependent epimerase/dehydratase family. As to quaternary structure, homodimer. As to expression, in roots, leaves, siliques, flowers, pollen and stems.

It localises to the golgi apparatus. Its subcellular location is the golgi stack membrane. The enzyme catalyses UDP-alpha-D-glucuronate = UDP-alpha-D-galacturonate. Involved in the synthesis of the negatively charged monosaccharide that forms the backbone of pectic cell wall components. The polypeptide is UDP-glucuronate 4-epimerase 3 (GAE3) (Arabidopsis thaliana (Mouse-ear cress)).